Here is a 202-residue protein sequence, read N- to C-terminus: Mevalonate-3-phosphate 5-kinase (202 aa).

It catalyses the reaction (R)-3-phosphomevalonate + ATP = (R)-3,5-bisphosphomevalonate + ADP + H(+). It functions in the pathway isoprenoid biosynthesis; isopentenyl diphosphate biosynthesis via mevalonate pathway. Phosphorylates mevalonate 3-phosphate to form mevalonate 3,5-bisphosphate. Functions in an alternative mevalonate pathway, only present in extreme acidophiles of the Thermoplasmatales order, which passes through mevalonate 3-phosphate rather than mevalonate 5-phosphate. This chain is Mevalonate-3-phosphate 5-kinase, found in Thermoplasma acidophilum (strain ATCC 25905 / DSM 1728 / JCM 9062 / NBRC 15155 / AMRC-C165).